Reading from the N-terminus, the 485-residue chain is Probable trichothecene esterase SAT6 (485 aa).

The interval 1-23 (MPQDPNTTLQMSSSKPSLSDLSV) is disordered. The span at 9–23 (LQMSSSKPSLSDLSV) shows a compositional bias: low complexity. Catalysis depends on charge relay system residues Ser-262, Asp-406, and His-438.

This sequence belongs to the AB hydrolase superfamily. Lipase family.

Its pathway is mycotoxin biosynthesis. In terms of biological role, probable trichothecene esterase; part of the satratoxin SC1 cluster involved in the biosynthesis of satratoxins, trichothecene mycotoxins that are associated with human food poisonings. Satratoxins are suggested to be made by products of multiple gene clusters (SC1, SC2 and SC3) that encode 21 proteins in all, including polyketide synthases, acetyltransferases, and other enzymes expected to modify the trichothecene skeleton. SC1 encodes 10 proteins, SAT1 to SAT10. The largest are SAT8, which encodes a putative polyketide synthase (PKS) with a conventional non-reducing architecture, and SAT10, a putative protein containing four ankyrin repeats and thus may be involved in protein scaffolding. The putative short-chain reductase SAT3 may assist the PKS in some capacity. SAT6 contains a secretory lipase domain and acts probably as a trichothecene esterase. SAT5 encodes a putative acetyltransferase, and so, with SAT6, may affect endogenous protection from toxicity. The probable transcription factor SAT9 may regulate the expression of the SC1 cluster. SC2 encodes proteins SAT11 to SAT16, the largest of which encodes the putative reducing PKS SAT13. SAT11 is a cytochrome P450 monooxygenase, while SAT14 and SAT16 are probable acetyltransferases. The SC2 cluster may be regulated by the transcription factor SAT15. SC3 is a small cluster that encodes 5 proteins, SAT17 to SAT21. SAT21 is a putative MFS-type transporter which may have a role in exporting secondary metabolites. The four other proteins putatively encoded in SC3 include the taurine hydroxylase-like protein SAT17, the O-methyltransferase SAT18, the acetyltransferase SAT19, and the Cys6-type zinc finger SAT20, the latter being probably involved in regulation of SC3 expression. This is Probable trichothecene esterase SAT6 from Stachybotrys chartarum (strain CBS 109288 / IBT 7711) (Toxic black mold).